A 152-amino-acid chain; its full sequence is Superoxide dismutase [Cu-Zn] 2 (152 aa).

Residues His-45, His-47, and His-62 each contribute to the Cu cation site. A disordered region spans residues 53-81 (TNGSMSTGPHFNPDGKQHGAPEDANRHAG). 4 residues coordinate Zn(2+): His-62, His-70, His-79, and Asp-82. Basic and acidic residues predominate over residues 65 to 81 (PDGKQHGAPEDANRHAG). His-119 provides a ligand contact to Cu cation.

This sequence belongs to the Cu-Zn superoxide dismutase family. Homodimer. Cu cation is required as a cofactor. The cofactor is Zn(2+).

The protein resides in the cytoplasm. The catalysed reaction is 2 superoxide + 2 H(+) = H2O2 + O2. In terms of biological role, destroys radicals which are normally produced within the cells and which are toxic to biological systems. This chain is Superoxide dismutase [Cu-Zn] 2 (SODCC2), found in Brassica juncea (Indian mustard).